Consider the following 352-residue polypeptide: UPF0324 membrane protein BCE_5279 (352 aa).

10 helical membrane-spanning segments follow: residues F25 to L47, I52 to G71, V111 to T130, G140 to V162, T169 to Y191, Y201 to G223, A230 to F252, L267 to P289, V291 to L313, and F328 to G350.

Belongs to the UPF0324 family.

It is found in the cell membrane. In Bacillus cereus (strain ATCC 10987 / NRS 248), this protein is UPF0324 membrane protein BCE_5279.